Reading from the N-terminus, the 143-residue chain is Small ribosomal subunit protein uS12 (143 aa).

A compositionally biased stretch (basic residues) spans 1 to 19 (MGKPKGIRAARKLKTHRQA). The interval 1–21 (MGKPKGIRAARKLKTHRQAQR) is disordered. P62 is modified (hydroxyproline).

Belongs to the universal ribosomal protein uS12 family. Component of the 40S small ribosomal subunit.

It localises to the cytoplasm. It is found in the cytosol. Its subcellular location is the rough endoplasmic reticulum. The protein is Small ribosomal subunit protein uS12 (rps-23) of Brugia malayi (Filarial nematode worm).